A 37-amino-acid polypeptide reads, in one-letter code: Large ribosomal subunit protein bL36 (37 aa).

It belongs to the bacterial ribosomal protein bL36 family.

This chain is Large ribosomal subunit protein bL36, found in Dechloromonas aromatica (strain RCB).